Reading from the N-terminus, the 205-residue chain is Cytochrome c oxidase subunit 3 (205 aa).

The next 5 membrane-spanning stretches (helical) occupy residues 28-48, 72-92, 104-124, 142-162, and 184-204; these read GTIVFLSQELMFFAGLFAMYF, ALVITIILISSSVTAQFGVFA, WFSLTILLGAIFLVGQAYEYF, FFITTGFHAAHVLAGALAFVV, and SYYWHFVDVVWIGLFITIYFI.

The protein belongs to the cytochrome c oxidase subunit 3 family. As to quaternary structure, associates with subunits I, II and IV to form cytochrome c oxidase.

It is found in the cell membrane. The catalysed reaction is 4 Fe(II)-[cytochrome c] + O2 + 8 H(+)(in) = 4 Fe(III)-[cytochrome c] + 2 H2O + 4 H(+)(out). This chain is Cytochrome c oxidase subunit 3 (ctaE), found in Corynebacterium diphtheriae (strain ATCC 700971 / NCTC 13129 / Biotype gravis).